The following is a 158-amino-acid chain: SsrA-binding protein (158 aa).

The protein belongs to the SmpB family.

The protein resides in the cytoplasm. Required for rescue of stalled ribosomes mediated by trans-translation. Binds to transfer-messenger RNA (tmRNA), required for stable association of tmRNA with ribosomes. tmRNA and SmpB together mimic tRNA shape, replacing the anticodon stem-loop with SmpB. tmRNA is encoded by the ssrA gene; the 2 termini fold to resemble tRNA(Ala) and it encodes a 'tag peptide', a short internal open reading frame. During trans-translation Ala-aminoacylated tmRNA acts like a tRNA, entering the A-site of stalled ribosomes, displacing the stalled mRNA. The ribosome then switches to translate the ORF on the tmRNA; the nascent peptide is terminated with the 'tag peptide' encoded by the tmRNA and targeted for degradation. The ribosome is freed to recommence translation, which seems to be the essential function of trans-translation. The sequence is that of SsrA-binding protein from Bartonella henselae (strain ATCC 49882 / DSM 28221 / CCUG 30454 / Houston 1) (Rochalimaea henselae).